The following is a 91-amino-acid chain: B3 domain-containing protein Os03g0164300 (91 aa).

Positions 1–91 (MTNAKMTFAV…VLVLKVHVLK (91 aa)) form a DNA-binding region, TF-B3.

The protein resides in the nucleus. The polypeptide is B3 domain-containing protein Os03g0164300 (Oryza sativa subsp. japonica (Rice)).